The chain runs to 240 residues: 4-hydroxy-tetrahydrodipicolinate reductase (240 aa).

NAD(+) contacts are provided by residues 79–81 (ATT) and 103–106 (SANM). The active-site Proton donor/acceptor is His-135. Residue His-136 participates in (S)-2,3,4,5-tetrahydrodipicolinate binding. The Proton donor role is filled by Lys-139. 145-146 (GT) is a binding site for (S)-2,3,4,5-tetrahydrodipicolinate.

This sequence belongs to the DapB family.

Its subcellular location is the cytoplasm. It carries out the reaction (S)-2,3,4,5-tetrahydrodipicolinate + NAD(+) + H2O = (2S,4S)-4-hydroxy-2,3,4,5-tetrahydrodipicolinate + NADH + H(+). It catalyses the reaction (S)-2,3,4,5-tetrahydrodipicolinate + NADP(+) + H2O = (2S,4S)-4-hydroxy-2,3,4,5-tetrahydrodipicolinate + NADPH + H(+). Its pathway is amino-acid biosynthesis; L-lysine biosynthesis via DAP pathway; (S)-tetrahydrodipicolinate from L-aspartate: step 4/4. Catalyzes the conversion of 4-hydroxy-tetrahydrodipicolinate (HTPA) to tetrahydrodipicolinate. This Staphylococcus saprophyticus subsp. saprophyticus (strain ATCC 15305 / DSM 20229 / NCIMB 8711 / NCTC 7292 / S-41) protein is 4-hydroxy-tetrahydrodipicolinate reductase.